The following is an 823-amino-acid chain: DNA mismatch repair protein MutS (823 aa).

605-612 provides a ligand contact to ATP; sequence GPNMSGKS.

It belongs to the DNA mismatch repair MutS family.

Functionally, this protein is involved in the repair of mismatches in DNA. It is possible that it carries out the mismatch recognition step. This protein has a weak ATPase activity. In Fervidobacterium nodosum (strain ATCC 35602 / DSM 5306 / Rt17-B1), this protein is DNA mismatch repair protein MutS.